We begin with the raw amino-acid sequence, 473 residues long: 3-isopropylmalate dehydratase large subunit (473 aa).

Positions 289–319 (TVTWGTTPGQTAGITEPIPDPDDLPEEDRDT) are disordered. The segment covering 291–301 (TWGTTPGQTAG) has biased composition (polar residues). Positions 307-317 (PDPDDLPEEDR) are enriched in acidic residues. Positions 348, 408, and 411 each coordinate [4Fe-4S] cluster.

This sequence belongs to the aconitase/IPM isomerase family. LeuC type 1 subfamily. Heterodimer of LeuC and LeuD. Requires [4Fe-4S] cluster as cofactor.

The catalysed reaction is (2R,3S)-3-isopropylmalate = (2S)-2-isopropylmalate. It functions in the pathway amino-acid biosynthesis; L-leucine biosynthesis; L-leucine from 3-methyl-2-oxobutanoate: step 2/4. Its function is as follows. Catalyzes the isomerization between 2-isopropylmalate and 3-isopropylmalate, via the formation of 2-isopropylmaleate. The polypeptide is 3-isopropylmalate dehydratase large subunit (Halorubrum lacusprofundi (strain ATCC 49239 / DSM 5036 / JCM 8891 / ACAM 34)).